A 1047-amino-acid chain; its full sequence is Carbamoyl phosphate synthase arginine-specific large chain (1047 aa).

Residues 1 to 401 (MPKRTDIQSV…GLQKAVRSLE (401 aa)) are carboxyphosphate synthetic domain. The ATP site is built by Arg129, Arg169, Gly175, Gly176, Lys208, Ile210, Glu215, Gly241, Val242, His243, Gln284, and Glu298. Residues 133–327 (RQLMHELHEP…IARMAAKLSL (195 aa)) form the ATP-grasp 1 domain. Gln284, Glu298, and Asn300 together coordinate Mg(2+). Positions 284, 298, and 300 each coordinate Mn(2+). The oligomerization domain stretch occupies residues 402-549 (IKTHGLSLPS…YSSWTGENDL (148 aa)). Residues 550–933 (LLPEKAKERV…AFRKAFAWGE (384 aa)) are carbamoyl phosphate synthetic domain. The ATP-grasp 2 domain maps to 676 to 865 (YEFMRSVEVP…LITYTIDVLF (190 aa)). Residues Arg712, Ala750, Glu756, Gly781, Val782, His783, Ser784, Gln824, and Glu836 each coordinate ATP. Mg(2+)-binding residues include Gln824, Glu836, and Asn838. 3 residues coordinate Mn(2+): Gln824, Glu836, and Asn838. The allosteric domain stretch occupies residues 934–1047 (EQTPALFRKK…PFLLPDVVMN (114 aa)). Residues 937-1047 (PALFRKKGSV…PFLLPDVVMN (111 aa)) form the MGS-like domain.

This sequence belongs to the CarB family. In terms of assembly, composed of two chains; the small (or glutamine) chain promotes the hydrolysis of glutamine to ammonia, which is used by the large (or ammonia) chain to synthesize carbamoyl phosphate. Tetramer of heterodimers (alpha,beta)4. It depends on Mg(2+) as a cofactor. The cofactor is Mn(2+).

The enzyme catalyses hydrogencarbonate + L-glutamine + 2 ATP + H2O = carbamoyl phosphate + L-glutamate + 2 ADP + phosphate + 2 H(+). The catalysed reaction is hydrogencarbonate + NH4(+) + 2 ATP = carbamoyl phosphate + 2 ADP + phosphate + 2 H(+). The protein operates within amino-acid biosynthesis; L-arginine biosynthesis; carbamoyl phosphate from bicarbonate: step 1/1. Its function is as follows. Large subunit of the glutamine-dependent carbamoyl phosphate synthetase (CPSase). CPSase catalyzes the formation of carbamoyl phosphate from the ammonia moiety of glutamine, carbonate, and phosphate donated by ATP, constituting the first step of the biosynthetic pathway leading to arginine and/or urea. The large subunit (synthetase) binds the substrates ammonia (free or transferred from glutamine from the small subunit), hydrogencarbonate and ATP and carries out an ATP-coupled ligase reaction, activating hydrogencarbonate by forming carboxy phosphate which reacts with ammonia to form carbamoyl phosphate. This chain is Carbamoyl phosphate synthase arginine-specific large chain, found in Halalkalibacterium halodurans (strain ATCC BAA-125 / DSM 18197 / FERM 7344 / JCM 9153 / C-125) (Bacillus halodurans).